A 777-amino-acid chain; its full sequence is E3 UFM1-protein ligase 1 homolog (777 aa).

Over residues 396–417 (MKHQDPMDRDSAVGEGKADKRE) the composition is skewed to basic and acidic residues. Positions 396 to 470 (MKHQDPMDRD…PSGGKKGGKD (75 aa)) are disordered.

This sequence belongs to the UFL1 family.

E3 UFM1-protein ligase that mediates ufmylation of target proteins. This is E3 UFM1-protein ligase 1 homolog from Aedes aegypti (Yellowfever mosquito).